The sequence spans 384 residues: Gastrin-releasing peptide receptor (384 aa).

The Extracellular segment spans residues 1–39; the sequence is MDPNNCSHLNLEVDPFLSCNNTFNQTLNPPKMDNWFHPG. Asn-5, Asn-20, and Asn-24 each carry an N-linked (GlcNAc...) asparagine glycan. A helical transmembrane segment spans residues 40 to 63; the sequence is IIYVIPAVYGLIIVIGLIGNITLI. Residues 64-77 lie on the Cytoplasmic side of the membrane; sequence KIFCTVKSMRNVPN. A helical transmembrane segment spans residues 78–97; it reads LFISSLALGDLLLLVTCAPV. The Extracellular portion of the chain corresponds to 98–115; that stretch reads DASKYLADRWLFGRIGCK. An intrachain disulfide couples Cys-114 to Cys-197. A helical transmembrane segment spans residues 116–137; sequence LIPFIQLTSVGVSVFTLTALSA. At 138–153 the chain is on the cytoplasmic side; it reads DRYKAIVRPMDIQASH. The helical transmembrane segment at 154-175 threads the bilayer; the sequence is ALMKICLKAALIWIVSMLLAIP. At 176–209 the chain is on the extracellular side; sequence EAVFSDLHPFHVKDTNQTFISCAPYPHSNELHPK. Residues 210-235 traverse the membrane as a helical segment; it reads IHSMASFLVFYIIPLSIISVYYYFIA. Residues 236 to 265 lie on the Cytoplasmic side of the membrane; sequence RNLIQSAYNLPVEGNIHVKKQIESRKRLAK. Residues 266–286 form a helical membrane-spanning segment; sequence TVLVFVGLFAFCWLPNHVIYL. The Extracellular portion of the chain corresponds to 287-299; the sequence is YRSYHYSEVDTSM. A helical membrane pass occupies residues 300-326; it reads LHFITSICARLLAFTNSCVNPFALYLL. The Cytoplasmic portion of the chain corresponds to 327 to 384; that stretch reads SKSFRKQFNTQLLCCQPSLLNRSHSTGRSTTCMTSFKSTNPSATFSLINGNICHEGYV. Cys-340 carries S-palmitoyl cysteine lipidation. Phosphoserine is present on Ser-351.

It belongs to the G-protein coupled receptor 1 family. Expressed in the hippocampal CA1 region (at protein level).

It is found in the cell membrane. Receptor for gastrin-releasing peptide (GRP). Signals via association with G proteins that activate a phosphatidylinositol-calcium second messenger system, resulting in Akt phosphorylation. Contributes to the regulation of food intake. Contributes to the perception of prurient stimuli and transmission of itch signals in the spinal cord that promote scratching behavior, but does not play a role in the perception of pain. Contributes primarily to nonhistaminergic itch sensation. In one study, shown to act in the amygdala as part of an inhibitory network which inhibits memory specifically related to learned fear. In another study, shown to contribute to disinhibition of glutamatergic cells in the auditory cortex via signaling on vasoactive intestinal peptide-expressing cells which leads to enhanced auditory fear memories. Contributes to the induction of sighing through signaling in the pre-Botzinger complex, a cluster of several thousand neurons in the ventrolateral medulla responsible for inspiration during respiratory activity. In Rattus norvegicus (Rat), this protein is Gastrin-releasing peptide receptor (Grpr).